We begin with the raw amino-acid sequence, 117 residues long: Large ribosomal subunit protein uL18 (117 aa).

It belongs to the universal ribosomal protein uL18 family. As to quaternary structure, part of the 50S ribosomal subunit; part of the 5S rRNA/L5/L18/L25 subcomplex. Contacts the 5S and 23S rRNAs.

Functionally, this is one of the proteins that bind and probably mediate the attachment of the 5S RNA into the large ribosomal subunit, where it forms part of the central protuberance. The protein is Large ribosomal subunit protein uL18 of Photobacterium profundum (strain SS9).